The primary structure comprises 89 residues: Large ribosomal subunit protein bL27 (89 aa).

Residues methionine 1–leucine 21 are disordered.

This sequence belongs to the bacterial ribosomal protein bL27 family.

The protein is Large ribosomal subunit protein bL27 of Hyphomonas neptunium (strain ATCC 15444).